The chain runs to 274 residues: MKKTQTWIVTCIYLQLLLFNPLVKTKGLCRNRVTDDVKDVTKLVANLPKDYKIALKYVPGMDVLPSHCWISVMVEQLSVSLTDLLDKFSNISEGLSNYSIIDKLVKIVDDLVECVEGHSSENVKKSSKSPEPRLFTPEEFFRIFNRSIDAFKDLEMVASKTSECVVSSTLSPEKDSRVSVTKPFMLPPVAASSLRNDSSSSNRKATNPIEDSSIQWAVMALPACFSLVIGFAFGAFYWKKKQPNLTRTVENIQINEEDNEISMLQEKEREFQEV.

The signal sequence occupies residues 1 to 25 (MKKTQTWIVTCIYLQLLLFNPLVKT). Residues 26–215 (KGLCRNRVTD…TNPIEDSSIQ (190 aa)) are Extracellular-facing. Cystine bridges form between Cys-29–Cys-114 and Cys-68–Cys-164. 4 N-linked (GlcNAc...) asparagine glycosylation sites follow: Asn-90, Asn-97, Asn-145, and Asn-196. Residues 216–238 (WAVMALPACFSLVIGFAFGAFYW) form a helical membrane-spanning segment. Over 239–274 (KKKQPNLTRTVENIQINEEDNEISMLQEKEREFQEV) the chain is Cytoplasmic.

The protein belongs to the SCF family. Homodimer, non-covalently linked. In terms of processing, a soluble form is produced by proteolytic processing of isoform 1 in the extracellular domain.

Its subcellular location is the cell membrane. The protein localises to the secreted. It is found in the cytoplasm. It localises to the cytoskeleton. The protein resides in the cell projection. Its subcellular location is the lamellipodium. The protein localises to the filopodium. In terms of biological role, stimulates the proliferation of mast cells. Able to augment the proliferation of both myeloid and lymphoid hematopoietic progenitors in bone marrow culture. Also mediates cell-cell adhesion. Acts synergistically with other cytokines, probably interleukins. This chain is Kit ligand (KITLG), found in Felis catus (Cat).